The following is a 399-amino-acid chain: Phosphoglycerate kinase (399 aa).

Residues 24–26, arginine 39, 62–65, arginine 121, and arginine 154 contribute to the substrate site; these read DYN and HLGR. ATP contacts are provided by residues lysine 204, glycine 295, glutamate 326, and 355 to 358; that span reads GGDS.

The protein belongs to the phosphoglycerate kinase family. Monomer.

The protein localises to the cytoplasm. It carries out the reaction (2R)-3-phosphoglycerate + ATP = (2R)-3-phospho-glyceroyl phosphate + ADP. The protein operates within carbohydrate degradation; glycolysis; pyruvate from D-glyceraldehyde 3-phosphate: step 2/5. The polypeptide is Phosphoglycerate kinase (Elusimicrobium minutum (strain Pei191)).